A 119-amino-acid polypeptide reads, in one-letter code: Large ribosomal subunit protein bL20 (119 aa).

This sequence belongs to the bacterial ribosomal protein bL20 family.

Binds directly to 23S ribosomal RNA and is necessary for the in vitro assembly process of the 50S ribosomal subunit. It is not involved in the protein synthesizing functions of that subunit. This chain is Large ribosomal subunit protein bL20, found in Streptococcus pyogenes serotype M1.